A 131-amino-acid chain; its full sequence is Probable calcium-binding protein CML34 (131 aa).

4 EF-hand domains span residues 1 to 33 (MSAK…FSPY), 34 to 69 (FTQE…MLKE), 70 to 97 (VFVF…LGKK), and 98 to 131 (FTEE…IGDI). Positions 11, 13, 15, 17, 22, 47, 49, 51, 53, and 58 each coordinate Ca(2+). Ca(2+) is bound by residues Asp-111, Asp-113, Asp-115, Tyr-117, and Glu-122.

Potential calcium sensor. The polypeptide is Probable calcium-binding protein CML34 (CML34) (Arabidopsis thaliana (Mouse-ear cress)).